The following is a 71-amino-acid chain: UPF0346 protein SPP_0954 (71 aa).

It belongs to the UPF0346 family.

The sequence is that of UPF0346 protein SPP_0954 from Streptococcus pneumoniae (strain P1031).